A 218-amino-acid chain; its full sequence is N-(5'-phosphoribosyl)anthranilate isomerase (218 aa).

Belongs to the TrpF family.

The catalysed reaction is N-(5-phospho-beta-D-ribosyl)anthranilate = 1-(2-carboxyphenylamino)-1-deoxy-D-ribulose 5-phosphate. It participates in amino-acid biosynthesis; L-tryptophan biosynthesis; L-tryptophan from chorismate: step 3/5. This chain is N-(5'-phosphoribosyl)anthranilate isomerase, found in Lachnoclostridium phytofermentans (strain ATCC 700394 / DSM 18823 / ISDg) (Clostridium phytofermentans).